The chain runs to 323 residues: GTP 3',8-cyclase (323 aa).

The Radical SAM core domain occupies 4-233; that stretch reads KYGREIDYLR…NGPAKYISIE (230 aa). Arginine 13 serves as a coordination point for GTP. [4Fe-4S] cluster contacts are provided by cysteine 20 and cysteine 24. S-adenosyl-L-methionine is bound at residue tyrosine 26. [4Fe-4S] cluster is bound at residue cysteine 27. Arginine 63 contacts GTP. Glycine 67 is a binding site for S-adenosyl-L-methionine. Residue threonine 94 participates in GTP binding. An S-adenosyl-L-methionine-binding site is contributed by serine 118. A GTP-binding site is contributed by lysine 154. Methionine 188 serves as a coordination point for S-adenosyl-L-methionine. Residues cysteine 250 and cysteine 253 each coordinate [4Fe-4S] cluster. Residue 255–257 coordinates GTP; it reads RIR. Position 267 (cysteine 267) interacts with [4Fe-4S] cluster.

It belongs to the radical SAM superfamily. MoaA family. As to quaternary structure, monomer and homodimer. The cofactor is [4Fe-4S] cluster.

It catalyses the reaction GTP + AH2 + S-adenosyl-L-methionine = (8S)-3',8-cyclo-7,8-dihydroguanosine 5'-triphosphate + 5'-deoxyadenosine + L-methionine + A + H(+). It participates in cofactor biosynthesis; molybdopterin biosynthesis. Catalyzes the cyclization of GTP to (8S)-3',8-cyclo-7,8-dihydroguanosine 5'-triphosphate. This is GTP 3',8-cyclase from Clostridium perfringens (strain 13 / Type A).